Consider the following 148-residue polypeptide: IQ domain-containing protein F5 (148 aa).

IQ domains lie at glutamate 11 to isoleucine 40 and lysine 67 to isoleucine 96.

The sequence is that of IQ domain-containing protein F5 (Iqcf5) from Mus musculus (Mouse).